The sequence spans 210 residues: uncharacterized protein (210 aa).

Disordered regions lie at residues Met1–Ile21 and Glu168–Gln210. Positions Ile21 to Ser175 form a coiled coil. Over residues Ser174–Glu184 the composition is skewed to polar residues.

Belongs to the SNF7 family.

This is an uncharacterized protein from Schizosaccharomyces pombe (strain 972 / ATCC 24843) (Fission yeast).